An 863-amino-acid chain; its full sequence is DNA mismatch repair protein MutS (863 aa).

615–622 provides a ligand contact to ATP; that stretch reads GPNMAGKS.

This sequence belongs to the DNA mismatch repair MutS family.

This protein is involved in the repair of mismatches in DNA. It is possible that it carries out the mismatch recognition step. This protein has a weak ATPase activity. The sequence is that of DNA mismatch repair protein MutS from Pelotomaculum thermopropionicum (strain DSM 13744 / JCM 10971 / SI).